The chain runs to 287 residues: UPF0098 protein AF_1698 (287 aa).

It belongs to the UPF0098 family.

This is UPF0098 protein AF_1698 from Archaeoglobus fulgidus (strain ATCC 49558 / DSM 4304 / JCM 9628 / NBRC 100126 / VC-16).